The following is a 93-amino-acid chain: Small ribosomal subunit protein bS6 (93 aa).

Belongs to the bacterial ribosomal protein bS6 family.

Functionally, binds together with bS18 to 16S ribosomal RNA. This is Small ribosomal subunit protein bS6 from Phytoplasma australiense.